A 221-amino-acid chain; its full sequence is Orotate phosphoribosyltransferase (221 aa).

Residue Lys-26 participates in 5-phospho-alpha-D-ribose 1-diphosphate binding. 34-35 serves as a coordination point for orotate; that stretch reads FF. 5-phospho-alpha-D-ribose 1-diphosphate-binding positions include 72-73, Arg-99, Lys-100, Lys-103, His-105, and 124-132; these read YK and DDVITAGTA. Orotate is bound by residues Thr-128 and Arg-156.

It belongs to the purine/pyrimidine phosphoribosyltransferase family. PyrE subfamily. Homodimer. Requires Mg(2+) as cofactor.

The catalysed reaction is orotidine 5'-phosphate + diphosphate = orotate + 5-phospho-alpha-D-ribose 1-diphosphate. It participates in pyrimidine metabolism; UMP biosynthesis via de novo pathway; UMP from orotate: step 1/2. In terms of biological role, catalyzes the transfer of a ribosyl phosphate group from 5-phosphoribose 1-diphosphate to orotate, leading to the formation of orotidine monophosphate (OMP). This is Orotate phosphoribosyltransferase from Colwellia psychrerythraea (strain 34H / ATCC BAA-681) (Vibrio psychroerythus).